The primary structure comprises 362 residues: 3-isopropylmalate dehydrogenase (362 aa).

G77 to E88 is a binding site for NAD(+). R95, R105, R134, and D223 together coordinate substrate. Residues D223, D248, and D252 each coordinate Mg(2+). Position 287–298 (G287–N298) interacts with NAD(+).

The protein belongs to the isocitrate and isopropylmalate dehydrogenases family. As to quaternary structure, homodimer. It depends on Mg(2+) as a cofactor. Mn(2+) serves as cofactor.

It localises to the cytoplasm. The enzyme catalyses (2R,3S)-3-isopropylmalate + NAD(+) = 4-methyl-2-oxopentanoate + CO2 + NADH. Its pathway is amino-acid biosynthesis; L-leucine biosynthesis; L-leucine from 3-methyl-2-oxobutanoate: step 3/4. In terms of biological role, catalyzes the oxidation of 3-carboxy-2-hydroxy-4-methylpentanoate (3-isopropylmalate) to 3-carboxy-4-methyl-2-oxopentanoate. The product decarboxylates to 4-methyl-2 oxopentanoate. In Zygosaccharomyces bailii, this protein is 3-isopropylmalate dehydrogenase (LEU2).